A 425-amino-acid polypeptide reads, in one-letter code: RNA-binding protein L (425 aa).

The segment covering 1–20 has biased composition (pro residues); that stretch reads MQQPPSQPQPGMGGPPPPPQ. Positions 1–82 are disordered; that stretch reads MQQPPSQPQP…AAPPPQAMPA (82 aa). The span at 21 to 31 shows a compositional bias: low complexity; that stretch reads GAAGQPPQWGA. The span at 32–80 shows a compositional bias: pro residues; it reads IPPPMPPHQYGAPPPQQPPAMWGQPPPQAHYGQVPPPQPYYAAPPPQAM. RRM domains are found at residues 90 to 170, 180 to 259, and 284 to 356; these read KTLW…WASA, YTIF…PAAN, and TTIF…WGRS.

Belongs to the polyadenylate-binding RBP45 family. As to quaternary structure, interacts with RBP-P. Interacts with RAB5A.

The protein localises to the nucleus. It localises to the cytoplasm. Functionally, RNA-binding protein that binds to a cis-localization element or zipcode, within the 5'-CDS of prolamine RNA. Binds strongly to glutelin and prolamin mRNAs, particularly to 3'-UTR and zipcode RNA. Recognizes and binds to glutelin zipcode RNA, which is required for proper mRNA localization to cisternal endoplasmic reticulum. Recognizes and binds to prolamin zipcode RNA, which is required for proper mRNA localization to the protein body endoplasmic reticulum that delimits the prolamine intracisternal inclusion granules. Required for the correct localization of glutelin and prolamine mRNA in endosperm cells during grain development. RBP-L and RBP-P form a quaternary complex with the membrane trafficking factors NSF and RAB5A. This quaternay complex carries glutelin mRNAs for active transport on endosomes to the cortical endoplasmic reticulum membrane, and enables endosome-mediated glutelin mRNA transport in endosperm cells. The protein is RNA-binding protein L of Oryza sativa subsp. japonica (Rice).